We begin with the raw amino-acid sequence, 128 residues long: Sirohydrochlorin cobaltochelatase (128 aa).

Residue His-9 is the Proton acceptor of the active site. His-9 provides a ligand contact to Co(2+). Residues Lys-43 and 68 to 73 each bind substrate; that span reads FATGTH. His-73 contributes to the Co(2+) binding site.

Belongs to the CbiX family. CbiXS subfamily. Homotetramer; dimer of dimers.

It carries out the reaction Co-sirohydrochlorin + 2 H(+) = sirohydrochlorin + Co(2+). The protein operates within cofactor biosynthesis; adenosylcobalamin biosynthesis; cob(II)yrinate a,c-diamide from sirohydrochlorin (anaerobic route): step 1/10. Catalyzes the insertion of Co(2+) into sirohydrochlorin as part of the anaerobic pathway to cobalamin biosynthesis. In Saccharolobus islandicus (strain Y.G.57.14 / Yellowstone #1) (Sulfolobus islandicus), this protein is Sirohydrochlorin cobaltochelatase.